The primary structure comprises 191 residues: Cell division protein SepF (191 aa).

Polar residues predominate over residues 153–178; sequence FPEEVSPSNISSKKTSPYSLETNTTP. Positions 153–191 are disordered; the sequence is FPEEVSPSNISSKKTSPYSLETNTTPEPAWGESKLSAFS.

Belongs to the SepF family. In terms of assembly, homodimer. Interacts with FtsZ.

Its subcellular location is the cytoplasm. Its function is as follows. Cell division protein that is part of the divisome complex and is recruited early to the Z-ring. Probably stimulates Z-ring formation, perhaps through the cross-linking of FtsZ protofilaments. Its function overlaps with FtsA. The chain is Cell division protein SepF from Prochlorococcus marinus (strain MIT 9515).